Reading from the N-terminus, the 257-residue chain is UPF0246 protein Sbal195_1149 (257 aa).

The protein belongs to the UPF0246 family.

This Shewanella baltica (strain OS195) protein is UPF0246 protein Sbal195_1149.